The following is a 160-amino-acid chain: Protein MGF 300-2R (160 aa).

Belongs to the asfivirus MGF 300 family.

Functionally, plays a role in virus cell tropism, and may be required for efficient virus replication in macrophages. The polypeptide is Protein MGF 300-2R (African swine fever virus (isolate Tick/South Africa/Pretoriuskop Pr4/1996) (ASFV)).